The following is a 208-amino-acid chain: Small ribosomal subunit protein uS5 (208 aa).

Positions 1 to 19 are enriched in polar residues; sequence MTDSNNQSPNKKTSGSSGA. The tract at residues 1–54 is disordered; sequence MTDSNNQSPNKKTSGSSGAPTAADGRQENRRSRGEKRGGRRDRRGQERDSEWQE. Basic and acidic residues-rich tracts occupy residues 25 to 37 and 44 to 54; these read GRQENRRSRGEKR and RGQERDSEWQE. The region spanning 52–115 is the S5 DRBM domain; sequence WQERVVQIRR…ADGKKHLVRV (64 aa).

It belongs to the universal ribosomal protein uS5 family. As to quaternary structure, part of the 30S ribosomal subunit. Contacts proteins S4 and S8.

Functionally, with S4 and S12 plays an important role in translational accuracy. Located at the back of the 30S subunit body where it stabilizes the conformation of the head with respect to the body. This Prochlorococcus marinus (strain NATL1A) protein is Small ribosomal subunit protein uS5.